Reading from the N-terminus, the 285-residue chain is MTTNDSWFTEHFQATGSAIGFRITGKLDEVQSPFQKIEIYNSTDWGKLMVIDGALMLTSRDNFLYHEMISHPALFTHTAPKCVVIIGGGDCGTLREVLKHPDIEQVTQCDIDEQVTRMAEKHFPELCTSNNDPRATLLFSDGVAYMTDCPTNSVDVIIVDSTDPVGPAKGLFNRTFYESCFRALKNDGLLVQQSESPLALLELIKEMRHEMSKAGFKAFKTLPFPQPCYPTGWWSVTLSSKQPNANFAFRQTDAQTKPFDTLYYNAHLHHGVLVPPPFIAHALGE.

The 237-residue stretch at 5 to 241 (DSWFTEHFQA…GWWSVTLSSK (237 aa)) folds into the PABS domain. Q35 contributes to the S-methyl-5'-thioadenosine binding site. Spermidine is bound by residues H66 and D90. Residues D110 and 141-142 (DG) contribute to the S-methyl-5'-thioadenosine site. The active-site Proton acceptor is D160. Spermidine is bound at residue 160 to 163 (DSTD). P167 is an S-methyl-5'-thioadenosine binding site.

This sequence belongs to the spermidine/spermine synthase family. In terms of assembly, homodimer or homotetramer.

It is found in the cytoplasm. The enzyme catalyses S-adenosyl 3-(methylsulfanyl)propylamine + putrescine = S-methyl-5'-thioadenosine + spermidine + H(+). The protein operates within amine and polyamine biosynthesis; spermidine biosynthesis; spermidine from putrescine: step 1/1. Catalyzes the irreversible transfer of a propylamine group from the amino donor S-adenosylmethioninamine (decarboxy-AdoMet) to putrescine (1,4-diaminobutane) to yield spermidine. This chain is Polyamine aminopropyltransferase, found in Xylella fastidiosa (strain 9a5c).